Here is a 159-residue protein sequence, read N- to C-terminus: Endoribonuclease YbeY (159 aa).

Zn(2+) is bound by residues H125, H129, and H135.

Belongs to the endoribonuclease YbeY family. Requires Zn(2+) as cofactor.

The protein localises to the cytoplasm. In terms of biological role, single strand-specific metallo-endoribonuclease involved in late-stage 70S ribosome quality control and in maturation of the 3' terminus of the 16S rRNA. The chain is Endoribonuclease YbeY from Brevibacillus brevis (strain 47 / JCM 6285 / NBRC 100599).